The chain runs to 72 residues: Translation initiation factor IF-1 (72 aa).

Residues 1 to 72 (MSKEDAIEVM…TRGRIVYRYK (72 aa)) form the S1-like domain.

Belongs to the IF-1 family. As to quaternary structure, component of the 30S ribosomal translation pre-initiation complex which assembles on the 30S ribosome in the order IF-2 and IF-3, IF-1 and N-formylmethionyl-tRNA(fMet); mRNA recruitment can occur at any time during PIC assembly.

It localises to the cytoplasm. Functionally, one of the essential components for the initiation of protein synthesis. Stabilizes the binding of IF-2 and IF-3 on the 30S subunit to which N-formylmethionyl-tRNA(fMet) subsequently binds. Helps modulate mRNA selection, yielding the 30S pre-initiation complex (PIC). Upon addition of the 50S ribosomal subunit IF-1, IF-2 and IF-3 are released leaving the mature 70S translation initiation complex. The chain is Translation initiation factor IF-1 from Koribacter versatilis (strain Ellin345).